A 404-amino-acid polypeptide reads, in one-letter code: Cytochrome P450 monooxygenase avaI (404 aa).

Cys382 is a heme binding site.

It belongs to the cytochrome P450 family. The cofactor is heme.

Its pathway is secondary metabolite biosynthesis. Its function is as follows. Cytochrome P450 monooxygenase; part of the cluster that mediates the biosynthesis of a highly modified cyclo-arginine-tryptophan dipeptide (cRW). The first step of the pathway is perfornmed by the arginine-containing cyclodipeptide synthase (RCPDS) avaA that acts as the scaffold-generating enzyme and is responsible for formation of the cyclo-Arg-Trp (cRW) diketopiperazine. AvaB then acts as a multifunctional flavoenzyme that is responsible for generating the cyclo-Arg-formylkynurenine DKP, which can be deformylated by avaC. AvaB then further catalyzes an additional N-oxidation followed by cyclization and dehydration. The next step is an N-acetylation of the guanidine group catalyzed by the arginine N-acetyltransferase avaD. The roles of the additional enzymes identified within the ava cluster still have to be determined. The protein is Cytochrome P450 monooxygenase avaI of Aspergillus versicolor.